The following is a 161-amino-acid chain: Epididymal protein 13 (161 aa).

Residues 1–23 (MHRSEPFLKMSLLILLFLGLAEA) form the signal peptide. An N-linked (GlcNAc...) asparagine glycan is attached at Asn56.

Its subcellular location is the secreted. The polypeptide is Epididymal protein 13 (Homo sapiens (Human)).